The primary structure comprises 246 residues: UDP-N-acetyl-D-mannosaminuronic acid transferase (246 aa).

Belongs to the glycosyltransferase 26 family.

It catalyses the reaction UDP-N-acetyl-alpha-D-mannosaminouronate + N-acetyl-alpha-D-glucosaminyl-di-trans,octa-cis-undecaprenyl diphosphate = beta-D-ManNAcA-(1-&gt;4)-alpha-D-GlcNAc-di-trans,octa-cis-undecaprenyl diphosphate + UDP + H(+). It participates in bacterial outer membrane biogenesis; enterobacterial common antigen biosynthesis. In terms of biological role, catalyzes the synthesis of Und-PP-GlcNAc-ManNAcA (Lipid II), the second lipid-linked intermediate involved in enterobacterial common antigen (ECA) synthesis. The sequence is that of UDP-N-acetyl-D-mannosaminuronic acid transferase from Salmonella agona (strain SL483).